The following is a 185-amino-acid chain: Ribosome-recycling factor (185 aa).

The protein belongs to the RRF family.

The protein localises to the cytoplasm. Responsible for the release of ribosomes from messenger RNA at the termination of protein biosynthesis. May increase the efficiency of translation by recycling ribosomes from one round of translation to another. The sequence is that of Ribosome-recycling factor from Oceanobacillus iheyensis (strain DSM 14371 / CIP 107618 / JCM 11309 / KCTC 3954 / HTE831).